Consider the following 305-residue polypeptide: Ribonuclease BN (305 aa).

Residues histidine 64, histidine 66, aspartate 68, histidine 69, histidine 141, aspartate 212, and histidine 270 each contribute to the Zn(2+) site. Residue aspartate 68 is the Proton acceptor of the active site.

This sequence belongs to the RNase Z family. RNase BN subfamily. Homodimer. Zn(2+) is required as a cofactor.

In terms of biological role, zinc phosphodiesterase, which has both exoribonuclease and endoribonuclease activities. In Shigella boydii serotype 18 (strain CDC 3083-94 / BS512), this protein is Ribonuclease BN.